A 367-amino-acid chain; its full sequence is MSLAHQVLAVNNDLPIRTDKPVHSGKVRSVYWLTAEDSARLIKEKGYNVAADAPLAIMVISDRLSAFDCIWHAEGDVRGVPGKGAALNAISNHWFELFRQNGLADSHILDIPHPFIWIVQKAKPVMIEAICRQYITGSMWRAYSKGERNFCGINLEDGLQKDQKLSELLITPSTKGILKGVPGVPEVDDVNITRADIENNFAAFQFKQKSDIDQYEKLLKEGFNLISGALEELDQIFVDTKFEFGYVTDASGNDKLIYMDEVGTPDSSRIWDGENYRNGKIIEKSKEGFRQTLLSHFPDPDILLNKDRMPERQALAQDNALPIDVFMDLSSTYLDIAEKITGQKIVLSENPKQEIIDILARDFDVII.

Belongs to the SAICAR synthetase family.

The enzyme catalyses 5-amino-1-(5-phospho-D-ribosyl)imidazole-4-carboxylate + L-aspartate + ATP = (2S)-2-[5-amino-1-(5-phospho-beta-D-ribosyl)imidazole-4-carboxamido]succinate + ADP + phosphate + 2 H(+). It participates in purine metabolism; IMP biosynthesis via de novo pathway; 5-amino-1-(5-phospho-D-ribosyl)imidazole-4-carboxamide from 5-amino-1-(5-phospho-D-ribosyl)imidazole-4-carboxylate: step 1/2. This Saccharophagus degradans (strain 2-40 / ATCC 43961 / DSM 17024) protein is Phosphoribosylaminoimidazole-succinocarboxamide synthase.